We begin with the raw amino-acid sequence, 189 residues long: Glycerol-3-phosphate acyltransferase (189 aa).

The next 5 helical transmembrane spans lie at 1–21, 50–70, 72–92, 111–131, and 151–171; these read MVWLLAILAYLLGSLSFAVLL, KLAILTLLGDVGKGLLPVLVA, WLGLGVMEEAWVGIAAVIGHL, MLLGLYPPAVLLAAAAWLLTF, and LLAWQQPGALLPMTVLTGLIV.

This sequence belongs to the PlsY family. As to quaternary structure, probably interacts with PlsX.

The protein resides in the cell inner membrane. It catalyses the reaction an acyl phosphate + sn-glycerol 3-phosphate = a 1-acyl-sn-glycero-3-phosphate + phosphate. The protein operates within lipid metabolism; phospholipid metabolism. Functionally, catalyzes the transfer of an acyl group from acyl-phosphate (acyl-PO(4)) to glycerol-3-phosphate (G3P) to form lysophosphatidic acid (LPA). This enzyme utilizes acyl-phosphate as fatty acyl donor, but not acyl-CoA or acyl-ACP. The protein is Glycerol-3-phosphate acyltransferase of Pseudomonas aeruginosa (strain LESB58).